A 359-amino-acid chain; its full sequence is Peptide chain release factor 1 (359 aa).

Glutamine 235 bears the N5-methylglutamine mark.

Belongs to the prokaryotic/mitochondrial release factor family. In terms of processing, methylated by PrmC. Methylation increases the termination efficiency of RF1.

It is found in the cytoplasm. In terms of biological role, peptide chain release factor 1 directs the termination of translation in response to the peptide chain termination codons UAG and UAA. The protein is Peptide chain release factor 1 of Anaplasma marginale (strain Florida).